The following is a 179-amino-acid chain: Adenine phosphoribosyltransferase (179 aa).

It belongs to the purine/pyrimidine phosphoribosyltransferase family. As to quaternary structure, homodimer.

It is found in the cytoplasm. It carries out the reaction AMP + diphosphate = 5-phospho-alpha-D-ribose 1-diphosphate + adenine. Its pathway is purine metabolism; AMP biosynthesis via salvage pathway; AMP from adenine: step 1/1. Catalyzes a salvage reaction resulting in the formation of AMP, that is energically less costly than de novo synthesis. The chain is Adenine phosphoribosyltransferase from Helicobacter pylori (strain HPAG1).